The chain runs to 455 residues: Chromosomal replication initiator protein DnaA (455 aa).

Residues 1–75 (MDTNNNIEKE…EILSQNKVGM (75 aa)) form a domain I, interacts with DnaA modulators region. The segment at 75–106 (MHLAHSVDVRIEVAPKIQISAQPNINYKAVKT) is domain II. Residues 107–321 (SVKDSYTFEN…GAIIKISVNA (215 aa)) form a domain III, AAA+ region region. 4 residues coordinate ATP: Gly-151, Gly-153, Lys-154, and Thr-155. Residues 322-455 (NLMNAPIDLN…DKKTAFHSSE (134 aa)) are domain IV, binds dsDNA.

It belongs to the DnaA family. In terms of assembly, oligomerizes as a right-handed, spiral filament on DNA at oriC.

The protein resides in the cytoplasm. Its function is as follows. Plays an essential role in the initiation and regulation of chromosomal replication. ATP-DnaA binds to the origin of replication (oriC) to initiate formation of the DNA replication initiation complex once per cell cycle. Binds the DnaA box (a 9 base pair repeat at the origin) and separates the double-stranded (ds)DNA. Forms a right-handed helical filament on oriC DNA; dsDNA binds to the exterior of the filament while single-stranded (ss)DNA is stabiized in the filament's interior. The ATP-DnaA-oriC complex binds and stabilizes one strand of the AT-rich DNA unwinding element (DUE), permitting loading of DNA polymerase. After initiation quickly degrades to an ADP-DnaA complex that is not apt for DNA replication. Binds acidic phospholipids. The sequence is that of Chromosomal replication initiator protein DnaA from Helicobacter pylori (strain Shi470).